The primary structure comprises 66 residues: Large ribosomal subunit protein uL29 (66 aa).

The protein belongs to the universal ribosomal protein uL29 family.

In Bacillus mycoides (strain KBAB4) (Bacillus weihenstephanensis), this protein is Large ribosomal subunit protein uL29.